Here is a 235-residue protein sequence, read N- to C-terminus: Small heat shock protein, chloroplastic (235 aa).

Disordered regions lie at residues 1–23 (MAYT…TSKI) and 51–80 (TGDN…ERRP). The span at 52–63 (GDNKDTSVDVHH) shows a compositional bias: basic and acidic residues. A compositionally biased stretch (polar residues) spans 64-74 (SSAQGGNNQGT). A sHSP domain is found at 126–235 (SGTGEIRTPW…EKKVIDVQIN (110 aa)).

It belongs to the small heat shock protein (HSP20) family. As to expression, in fruits, flowers, leaves, and stems.

The protein localises to the plastid. The protein resides in the chloroplast. The polypeptide is Small heat shock protein, chloroplastic (HSP21) (Solanum lycopersicum (Tomato)).